A 638-amino-acid polypeptide reads, in one-letter code: Threonine--tRNA ligase (638 aa).

The TGS domain maps to 1–61 (MPIITLPDGS…NKDSKVVIIT (61 aa)). The interval 242 to 533 (DHRKLGKKHS…LIEQYEAKFP (292 aa)) is catalytic. Zn(2+) is bound by residues cysteine 333, histidine 384, and histidine 510.

Belongs to the class-II aminoacyl-tRNA synthetase family. Homodimer. It depends on Zn(2+) as a cofactor.

The protein resides in the cytoplasm. The enzyme catalyses tRNA(Thr) + L-threonine + ATP = L-threonyl-tRNA(Thr) + AMP + diphosphate + H(+). Functionally, catalyzes the attachment of threonine to tRNA(Thr) in a two-step reaction: L-threonine is first activated by ATP to form Thr-AMP and then transferred to the acceptor end of tRNA(Thr). Also edits incorrectly charged L-seryl-tRNA(Thr). The protein is Threonine--tRNA ligase of Prochlorococcus marinus (strain AS9601).